Consider the following 219-residue polypeptide: Orotate phosphoribosyltransferase (219 aa).

Lys-26 serves as a coordination point for 5-phospho-alpha-D-ribose 1-diphosphate. Residue 34 to 35 participates in orotate binding; it reads FF. 5-phospho-alpha-D-ribose 1-diphosphate-binding positions include 72–73, Arg-98, Lys-99, Lys-102, His-104, and 124–132; these read YK and DDVITAGTA. Orotate is bound by residues Thr-128 and Arg-156.

It belongs to the purine/pyrimidine phosphoribosyltransferase family. PyrE subfamily. Homodimer. Mg(2+) is required as a cofactor.

The catalysed reaction is orotidine 5'-phosphate + diphosphate = orotate + 5-phospho-alpha-D-ribose 1-diphosphate. The protein operates within pyrimidine metabolism; UMP biosynthesis via de novo pathway; UMP from orotate: step 1/2. Functionally, catalyzes the transfer of a ribosyl phosphate group from 5-phosphoribose 1-diphosphate to orotate, leading to the formation of orotidine monophosphate (OMP). This Xanthomonas oryzae pv. oryzae (strain MAFF 311018) protein is Orotate phosphoribosyltransferase.